A 207-amino-acid polypeptide reads, in one-letter code: Thiamine-phosphate synthase (207 aa).

4-amino-2-methyl-5-(diphosphooxymethyl)pyrimidine is bound by residues 36–40 (QLRMK) and Asn-68. Residues Asp-69 and Asp-88 each contribute to the Mg(2+) site. Ser-106 contributes to the 4-amino-2-methyl-5-(diphosphooxymethyl)pyrimidine binding site. 132–134 (TNT) lines the 2-[(2R,5Z)-2-carboxy-4-methylthiazol-5(2H)-ylidene]ethyl phosphate pocket. 4-amino-2-methyl-5-(diphosphooxymethyl)pyrimidine is bound at residue Lys-135. Residues Gly-162 and 182 to 183 (VS) each bind 2-[(2R,5Z)-2-carboxy-4-methylthiazol-5(2H)-ylidene]ethyl phosphate.

It belongs to the thiamine-phosphate synthase family. The cofactor is Mg(2+).

It carries out the reaction 2-[(2R,5Z)-2-carboxy-4-methylthiazol-5(2H)-ylidene]ethyl phosphate + 4-amino-2-methyl-5-(diphosphooxymethyl)pyrimidine + 2 H(+) = thiamine phosphate + CO2 + diphosphate. The catalysed reaction is 2-(2-carboxy-4-methylthiazol-5-yl)ethyl phosphate + 4-amino-2-methyl-5-(diphosphooxymethyl)pyrimidine + 2 H(+) = thiamine phosphate + CO2 + diphosphate. The enzyme catalyses 4-methyl-5-(2-phosphooxyethyl)-thiazole + 4-amino-2-methyl-5-(diphosphooxymethyl)pyrimidine + H(+) = thiamine phosphate + diphosphate. The protein operates within cofactor biosynthesis; thiamine diphosphate biosynthesis; thiamine phosphate from 4-amino-2-methyl-5-diphosphomethylpyrimidine and 4-methyl-5-(2-phosphoethyl)-thiazole: step 1/1. Its function is as follows. Condenses 4-methyl-5-(beta-hydroxyethyl)thiazole monophosphate (THZ-P) and 2-methyl-4-amino-5-hydroxymethyl pyrimidine pyrophosphate (HMP-PP) to form thiamine monophosphate (TMP). The polypeptide is Thiamine-phosphate synthase (Methanococcus maripaludis (strain C6 / ATCC BAA-1332)).